The sequence spans 330 residues: DNA-directed RNA polymerase subunit alpha (330 aa).

Residues 1 to 236 are alpha N-terminal domain (alpha-NTD); the sequence is MQGSVTEFLK…EQLDAFVDLR (236 aa). An alpha C-terminal domain (alpha-CTD) region spans residues 250-330; sequence FDPILLRPVD…NWPPASIAED (81 aa).

This sequence belongs to the RNA polymerase alpha chain family. Homodimer. The RNAP catalytic core consists of 2 alpha, 1 beta, 1 beta' and 1 omega subunit. When a sigma factor is associated with the core the holoenzyme is formed, which can initiate transcription.

It carries out the reaction RNA(n) + a ribonucleoside 5'-triphosphate = RNA(n+1) + diphosphate. DNA-dependent RNA polymerase catalyzes the transcription of DNA into RNA using the four ribonucleoside triphosphates as substrates. This Vibrio cholerae serotype O1 (strain ATCC 39315 / El Tor Inaba N16961) protein is DNA-directed RNA polymerase subunit alpha.